A 240-amino-acid chain; its full sequence is Flavin-dependent thymidylate synthase (240 aa).

Positions 13-235 (ITVELVKHSA…PETHAAFEKQ (223 aa)) constitute a ThyX domain. Residues Ser64, 87–89 (RHR), and Glu95 contribute to the FAD site. DUMP contacts are provided by residues 84–87 (EFMR), 95–99 (EESGR), and Arg167. The ThyX motif signature appears at 87 to 97 (RHRIASYNEES). FAD is bound by residues 183 to 185 (NAR) and Asn189. Arg194 serves as a coordination point for dUMP. The active-site Involved in ionization of N3 of dUMP, leading to its activation is the Arg194.

This sequence belongs to the thymidylate synthase ThyX family. Homotetramer. FAD is required as a cofactor.

The enzyme catalyses dUMP + (6R)-5,10-methylene-5,6,7,8-tetrahydrofolate + NADPH + H(+) = dTMP + (6S)-5,6,7,8-tetrahydrofolate + NADP(+). It participates in pyrimidine metabolism; dTTP biosynthesis. Catalyzes the reductive methylation of 2'-deoxyuridine-5'-monophosphate (dUMP) to 2'-deoxythymidine-5'-monophosphate (dTMP) while utilizing 5,10-methylenetetrahydrofolate (mTHF) as the methyl donor, and NADPH and FADH(2) as the reductant. The polypeptide is Flavin-dependent thymidylate synthase (Tropheryma whipplei (strain TW08/27) (Whipple's bacillus)).